Consider the following 483-residue polypeptide: Regulatory protein ViaA (483 aa).

It belongs to the ViaA family. As to quaternary structure, homodimer. Interacts with RavA.

Its subcellular location is the cytoplasm. In terms of biological role, component of the RavA-ViaA chaperone complex, which may act on the membrane to optimize the function of some of the respiratory chains. ViaA stimulates the ATPase activity of RavA. The sequence is that of Regulatory protein ViaA from Escherichia coli O127:H6 (strain E2348/69 / EPEC).